Reading from the N-terminus, the 639-residue chain is CTTNBP2 N-terminal-like protein (639 aa).

Residues 87–285 (MKQCKNMQER…DLEASHQHSS (199 aa)) are a coiled coil. Serine 284 and serine 285 each carry phosphoserine. Disordered regions lie at residues 387–430 (VENG…PCSS), 463–490 (RHKF…LSPT), and 511–609 (RFTS…AASL). Low complexity-rich tracts occupy residues 405–430 (PLSS…PCSS) and 467–477 (QSQADQDQQAS). Serine 481, serine 488, serine 523, serine 527, serine 560, serine 563, and serine 568 each carry phosphoserine. Residues 511–529 (RFTSQQGPIKPVSPNSSPF) are compositionally biased toward polar residues. Threonine 570 and threonine 590 each carry phosphothreonine. The span at 587–600 (PGLTPSPSATTPLT) shows a compositional bias: low complexity. Residue serine 592 is modified to Phosphoserine.

As to quaternary structure, interacts with CTTN/cortactin; this interaction may redistribute CTTN to stress fibers. May form homomers. Associates with the core of STRIPAK complexes composed of PP2A catalytic and scaffolding subunits, the striatins (PP2A regulatory subunits), the striatin-associated proteins MOB4, STRIP1 and STRIP2, PDCD10 and members of the STE20 kinases, such as STK24 and STK26.

Its subcellular location is the cell projection. The protein localises to the lamellipodium. It is found in the cytoplasm. It localises to the cytoskeleton. The protein resides in the stress fiber. Regulates lamellipodial actin dynamics in a CTTN-dependent manner. Associates with core striatin-interacting phosphatase and kinase (STRIPAK) complex to form CTTNBP2NL-STRIPAK complexes. STRIPAK complexes have critical roles in protein (de)phosphorylation and are regulators of multiple signaling pathways including Hippo, MAPK, nuclear receptor and cytoskeleton remodeling. Different types of STRIPAK complexes are involved in a variety of biological processes such as cell growth, differentiation, apoptosis, metabolism and immune regulation. This chain is CTTNBP2 N-terminal-like protein, found in Homo sapiens (Human).